The chain runs to 280 residues: UPF0750 membrane protein YitT (280 aa).

The next 4 helical transmembrane spans lie at 9–29 (LLIV…FLIP), 54–74 (FYIS…ILGW), 80–100 (SFTV…GILP), and 151–171 (VGTY…LLQG).

The protein belongs to the UPF0750 family.

The protein resides in the cell membrane. The polypeptide is UPF0750 membrane protein YitT (yitT) (Bacillus subtilis (strain 168)).